The following is a 142-amino-acid chain: Potassium voltage-gated channel subfamily E regulatory beta subunit 5 (142 aa).

N-linked (GlcNAc...) asparagine glycans are attached at residues Asn2 and Asn25. The helical transmembrane segment at 61-81 (LYILLIMIFYACLAGGLILAY) threads the bilayer. At 82-142 (TRSRKLVEAK…PALAQGAERV (61 aa)) the chain is on the cytoplasmic side. The interval 119–142 (SQAEGRRQLASEGLPALAQGAERV) is disordered.

It belongs to the potassium channel KCNE family. As to quaternary structure, interacts with KCNQ1; impairs KCNQ1 localization in lipid rafts and only conducts current upon strong and continued depolarization. In terms of tissue distribution, highly expressed in heart, skeletal muscle, brain, spinal cord and placenta.

The protein localises to the membrane. Functionally, potassium channel ancillary subunit that is essential for generation of some native K(+) currents by virtue of formation of heteromeric ion channel complex with voltage-gated potassium (Kv) channel pore-forming alpha subunits. Functions as an inhibitory beta-subunit of the repolarizing cardiac potassium ion channel KCNQ1. This Homo sapiens (Human) protein is Potassium voltage-gated channel subfamily E regulatory beta subunit 5 (KCNE5).